Here is a 173-residue protein sequence, read N- to C-terminus: Microfibrillar-associated protein 5 (173 aa).

Positions 1 to 21 are cleaved as a signal peptide; sequence MSLLGPKVLLFLAAFIITSDW. The short motif at 30 to 32 is the Cell attachment site element; it reads RGD. An O-linked (GalNAc...) threonine glycan is attached at threonine 54. N-linked (GlcNAc...) asparagine glycosylation occurs at asparagine 79.

This sequence belongs to the MFAP family. In terms of assembly, interacts with TGFB2. Interacts with BMP2. Interacts with FBN1 (via N-terminal domain) and FBN2. Post-translationally, forms intermolecular disulfide bonds either with other MAGP-2 molecules or with other components of the microfibrils. In terms of processing, N- and O-glycosylated. O-glycosylated with core 1 or possibly core 8 glycans. O-glycan heterogeneity at Thr-54: HexHexNAc (major) and HexHexNAc + sulfate (minor).

The protein resides in the secreted. It is found in the extracellular space. It localises to the extracellular matrix. May play a role in hematopoiesis. In the cardiovascular system, could regulate growth factors or participate in cell signaling in maintaining large vessel integrity. Component of the elastin-associated microfibrils. This is Microfibrillar-associated protein 5 (MFAP5) from Homo sapiens (Human).